The primary structure comprises 301 residues: Glycine--tRNA ligase alpha subunit (301 aa).

Belongs to the class-II aminoacyl-tRNA synthetase family. As to quaternary structure, tetramer of two alpha and two beta subunits.

Its subcellular location is the cytoplasm. It carries out the reaction tRNA(Gly) + glycine + ATP = glycyl-tRNA(Gly) + AMP + diphosphate. This is Glycine--tRNA ligase alpha subunit from Variovorax paradoxus (strain S110).